Here is a 150-residue protein sequence, read N- to C-terminus: Ribosomal RNA large subunit methyltransferase H (150 aa).

S-adenosyl-L-methionine contacts are provided by residues isoleucine 71, alanine 100, and leucine 118 to phenylalanine 123.

Belongs to the RNA methyltransferase RlmH family. Homodimer.

The protein localises to the cytoplasm. The enzyme catalyses pseudouridine(1915) in 23S rRNA + S-adenosyl-L-methionine = N(3)-methylpseudouridine(1915) in 23S rRNA + S-adenosyl-L-homocysteine + H(+). Functionally, specifically methylates the pseudouridine at position 1915 (m3Psi1915) in 23S rRNA. This chain is Ribosomal RNA large subunit methyltransferase H, found in Helicobacter acinonychis (strain Sheeba).